We begin with the raw amino-acid sequence, 862 residues long: Linoleate 9S-lipoxygenase 1 (862 aa).

Residues 34–161 enclose the PLAT domain; that stretch reads NDFGATIIDG…NYRYSRVFFA (128 aa). Residues 164-862 enclose the Lipoxygenase domain; sequence TYLPSQMPAA…AKGIPNSISI (699 aa). The segment at 212-241 is disordered; the sequence is GRPILGGNSDHPYPRRGRTERKPNASDPSL. Residues His-517, His-522, His-708, Asn-712, and Ile-862 each coordinate Fe cation.

The protein belongs to the lipoxygenase family. Monomer. Fe cation is required as a cofactor.

The enzyme catalyses (9Z,12Z)-octadecadienoate + O2 = (9S)-hydroperoxy-(10E,12Z)-octadecadienoate. Its pathway is lipid metabolism; oxylipin biosynthesis. In terms of biological role, plant lipoxygenase may be involved in a number of diverse aspects of plant physiology including growth and development, pest resistance, and senescence or responses to wounding. It catalyzes the hydroperoxidation of lipids containing a cis,cis-1,4-pentadiene structure. This chain is Linoleate 9S-lipoxygenase 1 (LOX1.1), found in Hordeum vulgare (Barley).